The sequence spans 435 residues: Keratin, type I cytoskeletal 18 (435 aa).

The head stretch occupies residues 2–84 (SYRPGSYSVS…SVSGSGLVGN (83 aa)). A coil 1A region spans residues 85–120 (EKETMIGLNDRLAAYLETVRNLEQANSKLEFQIREA). The IF rod domain occupies 85–396 (EKETMIGLND…RLLDGEDFRL (312 aa)). Residues 121–137 (LEKKGPTTRDLSPFEKT) are linker 1. Residues 138-229 (LEDLRKKVYD…QNHNQEVNDL (92 aa)) are coil 1B. A linker 12 region spans residues 230–253 (RNQIAQSGVQVDVDAPKGQDLAQV). The segment at 254–391 (LAEVRAQYES…IATYRRLLDG (138 aa)) is coil 2. The tract at residues 392–435 (EDFRLQDALVDQSSTKSIKKVTVTQTLVDGKVVSESTNTKEIGK) is tail.

Belongs to the intermediate filament family. In terms of assembly, heterotetramer of two type I and two type II keratins. Keratin-18 associates with keratin-8. Post-translationally, phosphorylated. In terms of processing, proteolytically cleaved by caspases during epithelial cell apoptosis.

Its function is as follows. When phosphorylated, plays a role in filament reorganization. This is Keratin, type I cytoskeletal 18 from Acipenser baerii (Siberian sturgeon).